The sequence spans 72 residues: Lantibiotic Flvbeta.g (72 aa).

The propeptide at 1–34 (MNNNNFDMEKFKKLAAIVSEGEIDEMLDETTVGA) is cleaved by FlvT. A cross-link (lanthionine (Ser-Cys); by FlvM2) is located at residues 36–40 (STLPC). Residues T37, T46, and T48 each carry the 2,3-didehydrobutyrine; by FlvM2 modification. 3 cross-links (beta-methyllanthionine (Thr-Cys); by FlvM2) span residues 55-61 (TTGFDWC), 63-66 (TGAC), and 67-70 (THSC).

In terms of processing, contains LL-lanthionine and DL-beta-methyllanthionine, when coepressed in E.coli with the flavecin synthetase FlvM2.

The protein localises to the secreted. Lanthionine-containing peptide antibiotic (lantibiotic) that is probably weakly active on Gram-positive bacteria, since its analog [Del1]Flvbeta.g shows weak antibacterial activity against M.luteus. This activity is synergistically enhanced by [Del2]Flvalpha.a, an analog of Flvalpha.a, which is encoded by the same operon than Flvbeta.g. The bactericidal activity of lantibiotics is based on depolarization of energized bacterial cytoplasmic membranes, initiated by the formation of aqueous transmembrane pores. In Ruminococcus flavefaciens, this protein is Lantibiotic Flvbeta.g.